Consider the following 92-residue polypeptide: Small ribosomal subunit protein uS19 (92 aa).

It belongs to the universal ribosomal protein uS19 family.

Protein S19 forms a complex with S13 that binds strongly to the 16S ribosomal RNA. This chain is Small ribosomal subunit protein uS19, found in Bifidobacterium longum subsp. infantis (strain ATCC 15697 / DSM 20088 / JCM 1222 / NCTC 11817 / S12).